The chain runs to 494 residues: Cytochrome P450 2A3 (494 aa).

Phosphoserine is present on Ser131. Lys379 is subject to N6-acetyllysine. Residue Cys439 coordinates heme.

This sequence belongs to the cytochrome P450 family. Heme serves as cofactor. In terms of tissue distribution, lung.

It is found in the endoplasmic reticulum membrane. The protein localises to the microsome membrane. The catalysed reaction is an organic molecule + reduced [NADPH--hemoprotein reductase] + O2 = an alcohol + oxidized [NADPH--hemoprotein reductase] + H2O + H(+). In terms of biological role, cytochromes P450 are a group of heme-thiolate monooxygenases. In liver microsomes, this enzyme is involved in an NADPH-dependent electron transport pathway. It oxidizes a variety of structurally unrelated compounds, including steroids, fatty acids, and xenobiotics. The polypeptide is Cytochrome P450 2A3 (Cyp2a3) (Rattus norvegicus (Rat)).